The sequence spans 331 residues: UAP56-interacting factor (331 aa).

A UAP56-binding motif motif is present at residues alanine 16–glutamate 34. 3 disordered regions span residues leucine 30–glycine 51, arginine 63–glycine 99, and glycine 158–glutamate 193. A compositionally biased stretch (polar residues) spans threonine 166–threonine 175.

The protein belongs to the UIF family.

Its subcellular location is the nucleus. The protein localises to the nucleoplasm. The protein resides in the nucleus speckle. In terms of biological role, required for mRNA export from the nucleus to the cytoplasm. Acts as an adapter that uses the ddx39b/uap56-nfx1 pathway to ensure efficient mRNA export and delivering to the nuclear pore. In Salmo salar (Atlantic salmon), this protein is UAP56-interacting factor (fyttd1).